Here is a 299-residue protein sequence, read N- to C-terminus: ATP phosphoribosyltransferase (299 aa).

It belongs to the ATP phosphoribosyltransferase family. Long subfamily. As to quaternary structure, equilibrium between an active dimeric form, an inactive hexameric form and higher aggregates. Interconversion between the various forms is largely reversible and is influenced by the natural substrates and inhibitors of the enzyme. The cofactor is Mg(2+).

It localises to the cytoplasm. The catalysed reaction is 1-(5-phospho-beta-D-ribosyl)-ATP + diphosphate = 5-phospho-alpha-D-ribose 1-diphosphate + ATP. It functions in the pathway amino-acid biosynthesis; L-histidine biosynthesis; L-histidine from 5-phospho-alpha-D-ribose 1-diphosphate: step 1/9. Feedback inhibited by histidine. Catalyzes the condensation of ATP and 5-phosphoribose 1-diphosphate to form N'-(5'-phosphoribosyl)-ATP (PR-ATP). Has a crucial role in the pathway because the rate of histidine biosynthesis seems to be controlled primarily by regulation of HisG enzymatic activity. The sequence is that of ATP phosphoribosyltransferase from Pectobacterium carotovorum subsp. carotovorum (strain PC1).